A 330-amino-acid polypeptide reads, in one-letter code: Low-redox potential peroxidase (330 aa).

The N-terminal stretch at 1–24 is a signal peptide; that stretch reads MRSSTHIFVSFVVYCGVFVTSAIA. N-linked (GlcNAc...) asparagine glycosylation is present at asparagine 27. 3 disulfide bridges follow: cysteine 34–cysteine 285, cysteine 54–cysteine 123, and cysteine 251–cysteine 314. Residues glycine 69, aspartate 71, and serine 73 each coordinate Ca(2+). Histidine 178 is a heme b binding site. Residues serine 179, aspartate 196, threonine 198, and aspartate 203 each contribute to the Ca(2+) site.

It belongs to the peroxidase family. Ligninase subfamily. Requires Ca(2+) as cofactor. Heme b is required as a cofactor.

It localises to the secreted. It catalyses the reaction 2 a phenolic donor + H2O2 = 2 a phenolic radical donor + 2 H2O. Its function is as follows. Can oxidize the lignin redox mediator veratryl alcohol to veratryl aldehyde. May be involved in oxidation of lignocellulose substrates. The sequence is that of Low-redox potential peroxidase (LnP) from Taiwanofungus camphoratus (Poroid brown-rot fungus).